The following is a 359-amino-acid chain: Adenosine deaminase (359 aa).

Positions 15 and 17 each coordinate Zn(2+). Positions 17, 19, and 184 each coordinate substrate. A Zn(2+)-binding site is contributed by H213. Catalysis depends on E216, which acts as the Proton donor. Residue D295 participates in Zn(2+) binding. Residue D296 participates in substrate binding.

Belongs to the metallo-dependent hydrolases superfamily. Adenosine and AMP deaminases family. Requires Zn(2+) as cofactor.

It is found in the cell membrane. The protein resides in the cell junction. Its subcellular location is the cytoplasmic vesicle lumen. It localises to the cytoplasm. The protein localises to the lysosome. It carries out the reaction adenosine + H2O + H(+) = inosine + NH4(+). It catalyses the reaction 2'-deoxyadenosine + H2O + H(+) = 2'-deoxyinosine + NH4(+). In terms of biological role, catalyzes the hydrolytic deamination of adenosine and 2-deoxyadenosine. Plays an important role in purine metabolism and in adenosine homeostasis. Modulates signaling by extracellular adenosine, and so contributes indirectly to cellular signaling events. May act as a positive regulator of T-cell coactivation. The polypeptide is Adenosine deaminase (ada) (Danio rerio (Zebrafish)).